The primary structure comprises 377 residues: Nitric oxide reductase FlRd-NAD(+) reductase (377 aa).

This sequence belongs to the FAD-dependent oxidoreductase family. The cofactor is FAD.

The protein resides in the cytoplasm. It carries out the reaction 2 reduced [nitric oxide reductase rubredoxin domain] + NAD(+) + H(+) = 2 oxidized [nitric oxide reductase rubredoxin domain] + NADH. Its pathway is nitrogen metabolism; nitric oxide reduction. Its function is as follows. One of at least two accessory proteins for anaerobic nitric oxide (NO) reductase. Reduces the rubredoxin moiety of NO reductase. This Klebsiella pneumoniae (strain 342) protein is Nitric oxide reductase FlRd-NAD(+) reductase.